A 1450-amino-acid polypeptide reads, in one-letter code: DNA-directed RNA polymerase III subunit rpc1 (1450 aa).

Zn(2+)-binding residues include cysteine 67, cysteine 70, cysteine 77, histidine 80, cysteine 107, cysteine 110, and cysteine 154. Mg(2+) is bound by residues aspartate 491, aspartate 493, and aspartate 495. The segment at 832–844 is bridging helix; it reads PTEFFFHTMGGRE.

Belongs to the RNA polymerase beta' chain family. As to quaternary structure, component of the RNA polymerase III (Pol III) complex consisting of 17 subunits.

The protein resides in the nucleus. It carries out the reaction RNA(n) + a ribonucleoside 5'-triphosphate = RNA(n+1) + diphosphate. DNA-dependent RNA polymerase catalyzes the transcription of DNA into RNA using the four ribonucleoside triphosphates as substrates. Largest and catalytic core component of RNA polymerase III which synthesizes small RNAs, such as 5S rRNA and tRNAs. Forms the polymerase active center together with the second largest subunit. A single-stranded DNA template strand of the promoter is positioned within the central active site cleft of Pol III. A bridging helix emanates from RPC1 and crosses the cleft near the catalytic site and is thought to promote translocation of Pol III by acting as a ratchet that moves the RNA-DNA hybrid through the active site by switching from straight to bent conformations at each step of nucleotide addition. This chain is DNA-directed RNA polymerase III subunit rpc1 (polr3a), found in Dictyostelium discoideum (Social amoeba).